The primary structure comprises 251 residues: Orotidine 5'-phosphate decarboxylase (251 aa).

Substrate is bound by residues Asp19, Lys42, 69 to 78, Thr133, Arg194, Gln204, Gly224, and Arg225; that span reads DLKFHDIPNT. The active-site Proton donor is Lys71.

The protein belongs to the OMP decarboxylase family. Type 1 subfamily. As to quaternary structure, homodimer.

It catalyses the reaction orotidine 5'-phosphate + H(+) = UMP + CO2. The protein operates within pyrimidine metabolism; UMP biosynthesis via de novo pathway; UMP from orotate: step 2/2. Its function is as follows. Catalyzes the decarboxylation of orotidine 5'-monophosphate (OMP) to uridine 5'-monophosphate (UMP). This is Orotidine 5'-phosphate decarboxylase from Syntrophus aciditrophicus (strain SB).